The primary structure comprises 599 residues: Beta-(1--&gt;2)glucan export ATP-binding/permease protein NdvA (599 aa).

The region spanning 21-311 (GWILAVANLL…VVNFINNVLM (291 aa)) is the ABC transmembrane type-1 domain. 6 consecutive transmembrane segments (helical) span residues 22-42 (WILAVANLLLATAQFAEPILF), 68-88 (LLGAWVGFGLFTIMCSALVAL), 146-166 (EHFAAILSLVVLLPLSLYINW), 168-188 (LAILLFVLCIVFTVLTTLVVH), 254-274 (VITRASTTITVLSIFALGIYL), and 276-296 (QQGLTSVGEIVMFVSFATLLI). The 235-residue stretch at 345 to 579 (VEFQNVSFSY…GGAFAQLARA (235 aa)) folds into the ABC transporter domain. 378-385 (GATGAGKS) is an ATP binding site.

This sequence belongs to the ABC transporter superfamily. Beta-(1--&gt;2)glucan exporter (TC 3.A.1.108.1) family. In terms of assembly, homodimer.

The protein resides in the cell inner membrane. It catalyses the reaction [(1-&gt;2)-beta-D-glucosyl](n)(in) + ATP + H2O = [(1-&gt;2)-beta-D-glucosyl](n)(out) + ADP + phosphate + H(+). In terms of biological role, involved in beta-(1--&gt;2)glucan export. Transmembrane domains (TMD) form a pore in the inner membrane and the ATP-binding domain (NBD) is responsible for energy generation. The protein is Beta-(1--&gt;2)glucan export ATP-binding/permease protein NdvA of Rhodopseudomonas palustris (strain ATCC BAA-98 / CGA009).